A 396-amino-acid chain; its full sequence is Na(+)/H(+) antiporter NhaA (396 aa).

The next 11 membrane-spanning stretches (helical) occupy residues 16–36 (GIILIMAAMLAMILANSGLAG), 59–79 (LLLWINDGFMAVFFLLVGLEV), 95–115 (TFPAIAAVGGMLAPALIYAFF), 124–144 (AGWAIPAATDIAFALGVMALL), 154–174 (VFLLALAIMDDLGVIIIIALF), 178–198 (QLSLTALAIGILATLTLLWMN), 213–233 (LVLWVAVLKSGVHATLAGVIV), 254–274 (ALHPWSAYLILPLFAFANAGV), 278–298 (GIGLSALLSPVPLGIMLGLFI), 328–348 (IFAVSILCGIGFTMSMFIASL), and 363–383 (LGILVGSTLAAIVGYLALRIA).

This sequence belongs to the NhaA Na(+)/H(+) (TC 2.A.33) antiporter family.

The protein localises to the cell inner membrane. The catalysed reaction is Na(+)(in) + 2 H(+)(out) = Na(+)(out) + 2 H(+)(in). Its function is as follows. Na(+)/H(+) antiporter that extrudes sodium in exchange for external protons. The polypeptide is Na(+)/H(+) antiporter NhaA (Aeromonas hydrophila subsp. hydrophila (strain ATCC 7966 / DSM 30187 / BCRC 13018 / CCUG 14551 / JCM 1027 / KCTC 2358 / NCIMB 9240 / NCTC 8049)).